The primary structure comprises 633 residues: Glutamyl-tRNA(Gln) amidotransferase subunit E (633 aa).

Belongs to the GatB/GatE family. GatE subfamily. In terms of assembly, heterodimer of GatD and GatE.

The catalysed reaction is L-glutamyl-tRNA(Gln) + L-glutamine + ATP + H2O = L-glutaminyl-tRNA(Gln) + L-glutamate + ADP + phosphate + H(+). Allows the formation of correctly charged Gln-tRNA(Gln) through the transamidation of misacylated Glu-tRNA(Gln) in organisms which lack glutaminyl-tRNA synthetase. The reaction takes place in the presence of glutamine and ATP through an activated gamma-phospho-Glu-tRNA(Gln). The GatDE system is specific for glutamate and does not act on aspartate. The chain is Glutamyl-tRNA(Gln) amidotransferase subunit E from Methanosarcina acetivorans (strain ATCC 35395 / DSM 2834 / JCM 12185 / C2A).